Consider the following 271-residue polypeptide: 2,3,4,5-tetrahydropyridine-2,6-dicarboxylate N-succinyltransferase (271 aa).

2 residues coordinate substrate: Arg102 and Asp139.

Belongs to the transferase hexapeptide repeat family. As to quaternary structure, homotrimer.

Its subcellular location is the cytoplasm. The enzyme catalyses (S)-2,3,4,5-tetrahydrodipicolinate + succinyl-CoA + H2O = (S)-2-succinylamino-6-oxoheptanedioate + CoA. Its pathway is amino-acid biosynthesis; L-lysine biosynthesis via DAP pathway; LL-2,6-diaminopimelate from (S)-tetrahydrodipicolinate (succinylase route): step 1/3. The protein is 2,3,4,5-tetrahydropyridine-2,6-dicarboxylate N-succinyltransferase of Coxiella burnetii (strain RSA 331 / Henzerling II).